A 128-amino-acid polypeptide reads, in one-letter code: Small ribosomal subunit protein bS6 (128 aa).

It belongs to the bacterial ribosomal protein bS6 family.

Its function is as follows. Binds together with bS18 to 16S ribosomal RNA. The sequence is that of Small ribosomal subunit protein bS6 from Thermotoga petrophila (strain ATCC BAA-488 / DSM 13995 / JCM 10881 / RKU-1).